The sequence spans 348 residues: UPF0324 membrane protein BH02290 (348 aa).

The next 11 membrane-spanning stretches (helical) occupy residues 13–35, 45–67, 74–96, 106–128, 135–157, 167–189, 196–218, 223–245, 257–275, 285–307, and 319–341; these read AFLN…AYGL, QAWL…CFTL, GITF…SISV, LLAS…GRLF, AMLV…APVI, SIAF…HPFL, YGVL…ASVS, QIAT…ALSI, LHTL…MLIR, LIPI…GLGV, and VILA…IQLN.

Belongs to the UPF0324 family.

The protein resides in the cell membrane. The chain is UPF0324 membrane protein BH02290 from Bartonella henselae (strain ATCC 49882 / DSM 28221 / CCUG 30454 / Houston 1) (Rochalimaea henselae).